A 399-amino-acid chain; its full sequence is Dual-specificity RNA methyltransferase RlmN (399 aa).

Catalysis depends on Glu116, which acts as the Proton acceptor. The region spanning 122 to 352 (SEDRLTLCIS…VLLRRSMGRD (231 aa)) is the Radical SAM core domain. Cysteines 129 and 357 form a disulfide. Residues Cys136, Cys140, and Cys143 each coordinate [4Fe-4S] cluster. S-adenosyl-L-methionine-binding positions include 185–186 (GE), Ser217, 238–240 (SLN), and Asn314. Cys357 (S-methylcysteine intermediate) is an active-site residue.

The protein belongs to the radical SAM superfamily. RlmN family. [4Fe-4S] cluster is required as a cofactor.

The protein localises to the cytoplasm. It carries out the reaction adenosine(2503) in 23S rRNA + 2 reduced [2Fe-2S]-[ferredoxin] + 2 S-adenosyl-L-methionine = 2-methyladenosine(2503) in 23S rRNA + 5'-deoxyadenosine + L-methionine + 2 oxidized [2Fe-2S]-[ferredoxin] + S-adenosyl-L-homocysteine. It catalyses the reaction adenosine(37) in tRNA + 2 reduced [2Fe-2S]-[ferredoxin] + 2 S-adenosyl-L-methionine = 2-methyladenosine(37) in tRNA + 5'-deoxyadenosine + L-methionine + 2 oxidized [2Fe-2S]-[ferredoxin] + S-adenosyl-L-homocysteine. In terms of biological role, specifically methylates position 2 of adenine 2503 in 23S rRNA and position 2 of adenine 37 in tRNAs. m2A2503 modification seems to play a crucial role in the proofreading step occurring at the peptidyl transferase center and thus would serve to optimize ribosomal fidelity. The protein is Dual-specificity RNA methyltransferase RlmN of Bdellovibrio bacteriovorus (strain ATCC 15356 / DSM 50701 / NCIMB 9529 / HD100).